Consider the following 467-residue polypeptide: MQMDNRLPPKKVPGFCSFRYGLSFLVHCCNVIITAQRACLNLTMVVMVNSTDPHGLPNTSTKKLLDNIKNPMYNWSPDIQGIILSSTSYGVIIIQVPVGYFSGIYSTKKMIGFALCLSSVLSLLIPPAAGIGVAWVVVCRAVQGAAQGIVATAQFEIYVKWAPPLERGRLTSMSTSGFLLGPFIVLLVTGVICESLGWPMVFYIFGACGCAVCLLWFVLFYDDPKDHPCISISEKEYITSSLVQQVSSSRQSLPIKAILKSLPVWAISTGSFTFFWSHNIMTLYTPMFINSMLHVNIKENGFLSSLPYLFAWICGNLAGQLSDFFLTRNILSVIAVRKLFTAAGFLLPAIFGVCLPYLSSTFYSIVIFLILAGATGSFCLGGVFINGLDIAPRYFGFIKACSTLTGMIGGLIASTLTGLILKQDPESAWFKTFILMAAINVTGLIFYLIVATAEIQDWAKEKQHTRL.

N-linked (GlcNAc...) asparagine glycans are attached at residues Asn-41, Asn-49, and Asn-58. Transmembrane regions (helical) follow at residues 81-101 (GIIL…VGYF), 119-139 (SVLS…VVVC), 178-198 (FLLG…SLGW), 200-220 (MVFY…FVLF), 257-277 (AILK…FFWS), 301-321 (GFLS…AGQL), 339-359 (LFTA…PYLS), 365-385 (IVIF…GVFI), 401-421 (CSTL…GLIL), and 433-453 (FILM…VATA).

The protein belongs to the major facilitator superfamily. Sodium/anion cotransporter family. Interacts with PDZK1. As to expression, expressed in kidney cortex, liver and brain but not in other tissues.

It is found in the apical cell membrane. It catalyses the reaction 3 Na(+)(out) + phosphate(out) = 3 Na(+)(in) + phosphate(in). The catalysed reaction is urate(out) = urate(in). Its function is as follows. Important for the resorption of phosphate by the kidney. May be involved in actively transporting phosphate into cells via Na(+) cotransport in the renal brush border membrane. Plays a role in urate transport in the kidney. The polypeptide is Sodium-dependent phosphate transport protein 1 (SLC17A1) (Homo sapiens (Human)).